A 26-amino-acid chain; its full sequence is Hainantoxin F1-31.97 (26 aa).

2 disulfide bridges follow: cysteine 2–cysteine 16 and cysteine 9–cysteine 21.

Belongs to the neurotoxin 10 (Hwtx-1) family. 17 (Hntx-9) subfamily. In terms of tissue distribution, expressed by the venom gland.

The protein resides in the secreted. Functionally, ion channel inhibitor. This chain is Hainantoxin F1-31.97, found in Cyriopagopus hainanus (Chinese bird spider).